We begin with the raw amino-acid sequence, 595 residues long: UvrABC system protein C (595 aa).

Residues 17–94 (FEPGCYLMKD…IKQYQPRYNI (78 aa)) enclose the GIY-YIG domain. Residues 199-234 (KTIIKNLESRMQAASENLEFEQAKEYRDLIQNIHNL) form the UVR domain.

This sequence belongs to the UvrC family. As to quaternary structure, interacts with UvrB in an incision complex.

The protein localises to the cytoplasm. Its function is as follows. The UvrABC repair system catalyzes the recognition and processing of DNA lesions. UvrC both incises the 5' and 3' sides of the lesion. The N-terminal half is responsible for the 3' incision and the C-terminal half is responsible for the 5' incision. The protein is UvrABC system protein C of Staphylococcus carnosus (strain TM300).